A 108-amino-acid polypeptide reads, in one-letter code: Protein S100-A15A (108 aa).

The EF-hand domain maps to 53-88 (KEPYYVTELFQATDKNRDNQICFDEFLYILGKLVKD). 5 residues coordinate Ca(2+): Asp-66, Asn-68, Asp-70, Gln-72, and Glu-77.

It belongs to the S-100 family.

This is Protein S100-A15A (S100A15A) from Gorilla gorilla gorilla (Western lowland gorilla).